Here is a 90-residue protein sequence, read N- to C-terminus: MSHDKKQNLQDVFLNSVRKTKTPLTIFLVNGVKLQGVVTWFDNFCVLLRRDGLSQLVYKHAISTIMPAAPVSLFEDDKADDDAAEESATD.

The 61-residue stretch at 11–71 folds into the Sm domain; it reads DVFLNSVRKT…ISTIMPAAPV (61 aa).

It belongs to the Hfq family. As to quaternary structure, homohexamer.

Its function is as follows. RNA chaperone that binds small regulatory RNA (sRNAs) and mRNAs to facilitate mRNA translational regulation in response to envelope stress, environmental stress and changes in metabolite concentrations. Also binds with high specificity to tRNAs. This is RNA-binding protein Hfq from Maricaulis maris (strain MCS10) (Caulobacter maris).